Consider the following 131-residue polypeptide: NADH-quinone oxidoreductase subunit I 2 (131 aa).

2 consecutive 4Fe-4S ferredoxin-type domains span residues 42–71 (LKVS…VEAG) and 81–110 (ERYE…MTGE). Positions 51, 54, 57, 61, 90, 93, 96, and 100 each coordinate [4Fe-4S] cluster.

It belongs to the complex I 23 kDa subunit family. As to quaternary structure, NDH-1 is composed of 14 different subunits. Subunits NuoA, H, J, K, L, M, N constitute the membrane sector of the complex. [4Fe-4S] cluster serves as cofactor.

The protein resides in the cell inner membrane. It carries out the reaction a quinone + NADH + 5 H(+)(in) = a quinol + NAD(+) + 4 H(+)(out). Functionally, NDH-1 shuttles electrons from NADH, via FMN and iron-sulfur (Fe-S) centers, to quinones in the respiratory chain. The immediate electron acceptor for the enzyme in this species is believed to be ubiquinone. Couples the redox reaction to proton translocation (for every two electrons transferred, four hydrogen ions are translocated across the cytoplasmic membrane), and thus conserves the redox energy in a proton gradient. The protein is NADH-quinone oxidoreductase subunit I 2 of Geobacter metallireducens (strain ATCC 53774 / DSM 7210 / GS-15).